A 75-amino-acid polypeptide reads, in one-letter code: Cytochrome c oxidase subunit 6C (75 aa).

The Mitochondrial matrix segment spans residues 1–13 (MASEVLVKPQMRG). The chain crosses the membrane as a helical span at residues 14–54 (LLARRLRIHMVGAFLVSLGVAALYKFGVAEPRKKAYADFYK). At 55–75 (NYSAEKDFEEMKKAGLFRSIK) the chain is on the mitochondrial intermembrane side.

This sequence belongs to the cytochrome c oxidase subunit 6c family. As to quaternary structure, component of the cytochrome c oxidase (complex IV, CIV), a multisubunit enzyme composed of 14 subunits. The complex is composed of a catalytic core of 3 subunits MT-CO1, MT-CO2 and MT-CO3, encoded in the mitochondrial DNA, and 11 supernumerary subunits COX4I, COX5A, COX5B, COX6A, COX6B, COX6C, COX7A, COX7B, COX7C, COX8 and NDUFA4, which are encoded in the nuclear genome. The complex exists as a monomer or a dimer and forms supercomplexes (SCs) in the inner mitochondrial membrane with NADH-ubiquinone oxidoreductase (complex I, CI) and ubiquinol-cytochrome c oxidoreductase (cytochrome b-c1 complex, complex III, CIII), resulting in different assemblies (supercomplex SCI(1)III(2)IV(1) and megacomplex MCI(2)III(2)IV(2)).

The protein resides in the mitochondrion inner membrane. The protein operates within energy metabolism; oxidative phosphorylation. Component of the cytochrome c oxidase, the last enzyme in the mitochondrial electron transport chain which drives oxidative phosphorylation. The respiratory chain contains 3 multisubunit complexes succinate dehydrogenase (complex II, CII), ubiquinol-cytochrome c oxidoreductase (cytochrome b-c1 complex, complex III, CIII) and cytochrome c oxidase (complex IV, CIV), that cooperate to transfer electrons derived from NADH and succinate to molecular oxygen, creating an electrochemical gradient over the inner membrane that drives transmembrane transport and the ATP synthase. Cytochrome c oxidase is the component of the respiratory chain that catalyzes the reduction of oxygen to water. Electrons originating from reduced cytochrome c in the intermembrane space (IMS) are transferred via the dinuclear copper A center (CU(A)) of subunit 2 and heme A of subunit 1 to the active site in subunit 1, a binuclear center (BNC) formed by heme A3 and copper B (CU(B)). The BNC reduces molecular oxygen to 2 water molecules using 4 electrons from cytochrome c in the IMS and 4 protons from the mitochondrial matrix. The polypeptide is Cytochrome c oxidase subunit 6C (COX6C) (Plecturocebus donacophilus (Bolivian gray titi monkey)).